The following is a 272-amino-acid chain: WIMGHMVNNIKQIDEFVNLGSNAIETDVSFDKKANPEYTYHGTPCDCGRDCLRWEYFNDFVKALRTATTPGNSKYDKLFLVVFDLKTSSLYDYRASEAGTKLAKNLLQHYWNNGNNGGRAYIILSIPNLKHYKLITGFQQTLKDEGHAELLDKVGYDFSGNDDIGDVQKTYEKAGVTGHVWQSDGITNCLLRGFTRINAAVANRDSANGIINKVYYWTVDKRQATRDTLDANVDGIMTNYPDITVEILNEDAYKTKFRIATYEDNPWETFKE.

His5 is an active-site residue. Residues Glu25 and Asp27 each coordinate Mg(2+). His41 (nucleophile) is an active-site residue. Disulfide bonds link Cys45–Cys51 and Cys47–Cys189. Residue Asp84 participates in Mg(2+) binding.

The protein belongs to the arthropod phospholipase D family. Class II subfamily. Mg(2+) is required as a cofactor. Expressed by the venom gland.

The protein localises to the secreted. It carries out the reaction an N-(acyl)-sphingosylphosphocholine = an N-(acyl)-sphingosyl-1,3-cyclic phosphate + choline. The catalysed reaction is an N-(acyl)-sphingosylphosphoethanolamine = an N-(acyl)-sphingosyl-1,3-cyclic phosphate + ethanolamine. The enzyme catalyses a 1-acyl-sn-glycero-3-phosphocholine = a 1-acyl-sn-glycero-2,3-cyclic phosphate + choline. It catalyses the reaction a 1-acyl-sn-glycero-3-phosphoethanolamine = a 1-acyl-sn-glycero-2,3-cyclic phosphate + ethanolamine. Dermonecrotic toxins cleave the phosphodiester linkage between the phosphate and headgroup of certain phospholipids (sphingolipid and lysolipid substrates), forming an alcohol (often choline) and a cyclic phosphate. This toxin acts on sphingomyelin (SM). It may also act on ceramide phosphoethanolamine (CPE), lysophosphatidylcholine (LPC) and lysophosphatidylethanolamine (LPE), but not on lysophosphatidylserine (LPS), and lysophosphatidylglycerol (LPG). It acts by transphosphatidylation, releasing exclusively cyclic phosphate products as second products. Induces dermonecrosis, hemolysis, increased vascular permeability, edema, inflammatory response, and platelet aggregation. In Loxosceles variegata (Recluse spider), this protein is Dermonecrotic toxin LvSicTox-alphaIC1bii.